Here is a 214-residue protein sequence, read N- to C-terminus: Thymidylate kinase (214 aa).

10-17 (GGEGAGKS) contributes to the ATP binding site.

Belongs to the thymidylate kinase family.

The catalysed reaction is dTMP + ATP = dTDP + ADP. Functionally, phosphorylation of dTMP to form dTDP in both de novo and salvage pathways of dTTP synthesis. The sequence is that of Thymidylate kinase from Brucella canis (strain ATCC 23365 / NCTC 10854 / RM-666).